The sequence spans 128 residues: Large ribosomal subunit protein eL22 (128 aa).

Belongs to the eukaryotic ribosomal protein eL22 family. Component of the large ribosomal subunit.

The protein localises to the cytoplasm. Its function is as follows. Component of the large ribosomal subunit. The ribosome is a large ribonucleoprotein complex responsible for the synthesis of proteins in the cell. The chain is Large ribosomal subunit protein eL22 (rpl22) from Ictalurus punctatus (Channel catfish).